Reading from the N-terminus, the 545-residue chain is Capsular polysaccharide phosphotransferase SacB (545 aa).

It belongs to the stealth family.

May be the polymerase that links individual UDP-N-acetyl-D-mannosamine monomers. In serotype A the capsule is composed of repeated units of (alpha 1-6)-linked N-acetyl-D-mannosamine-1-phosphate. This chain is Capsular polysaccharide phosphotransferase SacB (sacB), found in Neisseria meningitidis serogroup A.